The following is a 310-amino-acid chain: Glutamyl-Q tRNA(Asp) synthetase (310 aa).

L-glutamate contacts are provided by residues 8–12 (RFAPS) and Glu44. The short motif at 11-21 (PSPTGPLHLGS) is the 'HIGH' region element. Zn(2+) contacts are provided by Cys100, Cys102, Tyr123, and Cys127. L-glutamate contacts are provided by Tyr183 and Arg201. The 'KMSKS' region motif lies at 239–243 (KLSKQ). Residue Lys242 participates in ATP binding.

This sequence belongs to the class-I aminoacyl-tRNA synthetase family. GluQ subfamily. Zn(2+) is required as a cofactor.

Catalyzes the tRNA-independent activation of glutamate in presence of ATP and the subsequent transfer of glutamate onto a tRNA(Asp). Glutamate is transferred on the 2-amino-5-(4,5-dihydroxy-2-cyclopenten-1-yl) moiety of the queuosine in the wobble position of the QUC anticodon. This Cupriavidus metallidurans (strain ATCC 43123 / DSM 2839 / NBRC 102507 / CH34) (Ralstonia metallidurans) protein is Glutamyl-Q tRNA(Asp) synthetase.